The sequence spans 838 residues: Protein translocase subunit SecA (838 aa).

Residues Gln-87, 105-109 (GEGKT), and Asp-494 contribute to the ATP site. Basic and acidic residues-rich tracts occupy residues 781-790 (EQEFQHKDET) and 803-819 (EDAKKEPKRREAPKVGR). The interval 781-838 (EQEFQHKDETANVQYSGPAESAEDAKKEPKRREAPKVGRNDPCPCGSGKKYKKCHGAK) is disordered. Zn(2+) is bound by residues Cys-823, Cys-825, Cys-834, and His-835. Residues 829–838 (KKYKKCHGAK) are compositionally biased toward basic residues.

The protein belongs to the SecA family. Monomer and homodimer. Part of the essential Sec protein translocation apparatus which comprises SecA, SecYEG and auxiliary proteins SecDF-YajC and YidC. Zn(2+) serves as cofactor.

It is found in the cell inner membrane. Its subcellular location is the cytoplasm. The catalysed reaction is ATP + H2O + cellular proteinSide 1 = ADP + phosphate + cellular proteinSide 2.. Part of the Sec protein translocase complex. Interacts with the SecYEG preprotein conducting channel. Has a central role in coupling the hydrolysis of ATP to the transfer of proteins into and across the cell membrane, serving as an ATP-driven molecular motor driving the stepwise translocation of polypeptide chains across the membrane. The polypeptide is Protein translocase subunit SecA (Solidesulfovibrio magneticus (strain ATCC 700980 / DSM 13731 / RS-1) (Desulfovibrio magneticus)).